Consider the following 308-residue polypeptide: Glutaminase (308 aa).

Residues S66, N117, E161, N168, Y192, Y244, and V262 each coordinate substrate.

It belongs to the glutaminase family. In terms of assembly, homotetramer.

It carries out the reaction L-glutamine + H2O = L-glutamate + NH4(+). This Yersinia pestis bv. Antiqua (strain Nepal516) protein is Glutaminase.